A 315-amino-acid polypeptide reads, in one-letter code: Ribosomal RNA small subunit methyltransferase H (315 aa).

S-adenosyl-L-methionine-binding positions include 37–39, Asp-57, Asp-105, and Gln-112; that span reads GGH.

It belongs to the methyltransferase superfamily. RsmH family.

It is found in the cytoplasm. The enzyme catalyses cytidine(1402) in 16S rRNA + S-adenosyl-L-methionine = N(4)-methylcytidine(1402) in 16S rRNA + S-adenosyl-L-homocysteine + H(+). Specifically methylates the N4 position of cytidine in position 1402 (C1402) of 16S rRNA. In Nitrosococcus oceani (strain ATCC 19707 / BCRC 17464 / JCM 30415 / NCIMB 11848 / C-107), this protein is Ribosomal RNA small subunit methyltransferase H.